The following is a 49-amino-acid chain: MRVNITLACTETGDRNYISTKNKRTNPERIELKKYSPRLKKHTLHRETK.

It belongs to the bacterial ribosomal protein bL33 family.

The polypeptide is Large ribosomal subunit protein bL33B (Oceanobacillus iheyensis (strain DSM 14371 / CIP 107618 / JCM 11309 / KCTC 3954 / HTE831)).